A 341-amino-acid polypeptide reads, in one-letter code: Ketol-acid reductoisomerase (NADP(+)) (341 aa).

Positions 1 to 181 constitute a KARI N-terminal Rossmann domain; the sequence is MARVYREGDI…GCARAGVLET (181 aa). NADP(+) is bound by residues 24-27, Ser50, Ser52, and 82-85; these read FGSQ and DERQ. His107 is a catalytic residue. Gly133 serves as a coordination point for NADP(+). The 146-residue stretch at 182–327 folds into the KARI C-terminal knotted domain; sequence TFAEETETDL…AELRALAAEG (146 aa). Positions 190, 194, 226, and 230 each coordinate Mg(2+). Substrate is bound at residue Ser251.

This sequence belongs to the ketol-acid reductoisomerase family. It depends on Mg(2+) as a cofactor.

It carries out the reaction (2R)-2,3-dihydroxy-3-methylbutanoate + NADP(+) = (2S)-2-acetolactate + NADPH + H(+). It catalyses the reaction (2R,3R)-2,3-dihydroxy-3-methylpentanoate + NADP(+) = (S)-2-ethyl-2-hydroxy-3-oxobutanoate + NADPH + H(+). Its pathway is amino-acid biosynthesis; L-isoleucine biosynthesis; L-isoleucine from 2-oxobutanoate: step 2/4. It functions in the pathway amino-acid biosynthesis; L-valine biosynthesis; L-valine from pyruvate: step 2/4. Its function is as follows. Involved in the biosynthesis of branched-chain amino acids (BCAA). Catalyzes an alkyl-migration followed by a ketol-acid reduction of (S)-2-acetolactate (S2AL) to yield (R)-2,3-dihydroxy-isovalerate. In the isomerase reaction, S2AL is rearranged via a Mg-dependent methyl migration to produce 3-hydroxy-3-methyl-2-ketobutyrate (HMKB). In the reductase reaction, this 2-ketoacid undergoes a metal-dependent reduction by NADPH to yield (R)-2,3-dihydroxy-isovalerate. This chain is Ketol-acid reductoisomerase (NADP(+)), found in Rubrobacter xylanophilus (strain DSM 9941 / JCM 11954 / NBRC 16129 / PRD-1).